We begin with the raw amino-acid sequence, 431 residues long: Histidinol dehydrogenase (431 aa).

NAD(+) contacts are provided by Tyr130, Gln191, and Asn214. Residues Ser237, Gln259, and His262 each coordinate substrate. Residues Gln259 and His262 each coordinate Zn(2+). Residues Glu327 and His328 each act as proton acceptor in the active site. Substrate-binding residues include His328, Asp361, Glu415, and His420. Asp361 lines the Zn(2+) pocket. Zn(2+) is bound at residue His420.

Belongs to the histidinol dehydrogenase family. It depends on Zn(2+) as a cofactor.

It catalyses the reaction L-histidinol + 2 NAD(+) + H2O = L-histidine + 2 NADH + 3 H(+). It participates in amino-acid biosynthesis; L-histidine biosynthesis; L-histidine from 5-phospho-alpha-D-ribose 1-diphosphate: step 9/9. Functionally, catalyzes the sequential NAD-dependent oxidations of L-histidinol to L-histidinaldehyde and then to L-histidine. In Bradyrhizobium diazoefficiens (strain JCM 10833 / BCRC 13528 / IAM 13628 / NBRC 14792 / USDA 110), this protein is Histidinol dehydrogenase.